Reading from the N-terminus, the 79-residue chain is ATP synthase subunit c (79 aa).

2 helical membrane-spanning segments follow: residues methionine 11 to leucine 31 and phenylalanine 53 to tyrosine 73.

This sequence belongs to the ATPase C chain family. In terms of assembly, F-type ATPases have 2 components, F(1) - the catalytic core - and F(0) - the membrane proton channel. F(1) has five subunits: alpha(3), beta(3), gamma(1), delta(1), epsilon(1). F(0) has three main subunits: a(1), b(2) and c(10-14). The alpha and beta chains form an alternating ring which encloses part of the gamma chain. F(1) is attached to F(0) by a central stalk formed by the gamma and epsilon chains, while a peripheral stalk is formed by the delta and b chains.

Its subcellular location is the cell inner membrane. Its function is as follows. F(1)F(0) ATP synthase produces ATP from ADP in the presence of a proton or sodium gradient. F-type ATPases consist of two structural domains, F(1) containing the extramembraneous catalytic core and F(0) containing the membrane proton channel, linked together by a central stalk and a peripheral stalk. During catalysis, ATP synthesis in the catalytic domain of F(1) is coupled via a rotary mechanism of the central stalk subunits to proton translocation. Key component of the F(0) channel; it plays a direct role in translocation across the membrane. A homomeric c-ring of between 10-14 subunits forms the central stalk rotor element with the F(1) delta and epsilon subunits. The sequence is that of ATP synthase subunit c from Pectobacterium atrosepticum (strain SCRI 1043 / ATCC BAA-672) (Erwinia carotovora subsp. atroseptica).